The sequence spans 72 residues: Translation initiation factor IF-1 (72 aa).

In terms of domain architecture, S1-like spans 1–72; sequence MAKSDVIEVD…DKGRITYRYK (72 aa).

This sequence belongs to the IF-1 family. In terms of assembly, component of the 30S ribosomal translation pre-initiation complex which assembles on the 30S ribosome in the order IF-2 and IF-3, IF-1 and N-formylmethionyl-tRNA(fMet); mRNA recruitment can occur at any time during PIC assembly.

The protein resides in the cytoplasm. Its function is as follows. One of the essential components for the initiation of protein synthesis. Stabilizes the binding of IF-2 and IF-3 on the 30S subunit to which N-formylmethionyl-tRNA(fMet) subsequently binds. Helps modulate mRNA selection, yielding the 30S pre-initiation complex (PIC). Upon addition of the 50S ribosomal subunit IF-1, IF-2 and IF-3 are released leaving the mature 70S translation initiation complex. This is Translation initiation factor IF-1 from Sulfurimonas denitrificans (strain ATCC 33889 / DSM 1251) (Thiomicrospira denitrificans (strain ATCC 33889 / DSM 1251)).